The chain runs to 320 residues: Aspartate carbamoyltransferase catalytic subunit (320 aa).

Positions 65 and 66 each coordinate carbamoyl phosphate. Lysine 93 provides a ligand contact to L-aspartate. Carbamoyl phosphate-binding residues include arginine 115, histidine 143, and glutamine 146. Positions 176 and 230 each coordinate L-aspartate. Positions 271 and 272 each coordinate carbamoyl phosphate.

It belongs to the aspartate/ornithine carbamoyltransferase superfamily. ATCase family. In terms of assembly, heterododecamer (2C3:3R2) of six catalytic PyrB chains organized as two trimers (C3), and six regulatory PyrI chains organized as three dimers (R2).

It catalyses the reaction carbamoyl phosphate + L-aspartate = N-carbamoyl-L-aspartate + phosphate + H(+). The protein operates within pyrimidine metabolism; UMP biosynthesis via de novo pathway; (S)-dihydroorotate from bicarbonate: step 2/3. In terms of biological role, catalyzes the condensation of carbamoyl phosphate and aspartate to form carbamoyl aspartate and inorganic phosphate, the committed step in the de novo pyrimidine nucleotide biosynthesis pathway. The polypeptide is Aspartate carbamoyltransferase catalytic subunit (Maricaulis maris (strain MCS10) (Caulobacter maris)).